A 261-amino-acid chain; its full sequence is Glucosamine-6-phosphate deaminase (261 aa).

Residue Asp-67 is the Proton acceptor; for enolization step of the active site. Residue Asp-136 is the For ring-opening step of the active site. The Proton acceptor; for ring-opening step role is filled by His-138. Residue Glu-143 is the For ring-opening step of the active site.

The protein belongs to the glucosamine/galactosamine-6-phosphate isomerase family. NagB subfamily.

The enzyme catalyses alpha-D-glucosamine 6-phosphate + H2O = beta-D-fructose 6-phosphate + NH4(+). It participates in amino-sugar metabolism; N-acetylneuraminate degradation; D-fructose 6-phosphate from N-acetylneuraminate: step 5/5. In terms of biological role, catalyzes the reversible isomerization-deamination of glucosamine 6-phosphate (GlcN6P) to form fructose 6-phosphate (Fru6P) and ammonium ion. The polypeptide is Glucosamine-6-phosphate deaminase (Streptomyces coelicolor (strain ATCC BAA-471 / A3(2) / M145)).